A 969-amino-acid polypeptide reads, in one-letter code: Endogenous retrovirus group K member 11 Pol protein (969 aa).

Positions 57–245 (LEKGHIEPSF…TPFHYLGMQI (189 aa)) constitute a Reverse transcriptase domain. The LPQG signature appears at 161–164 (LPQG). An RNase H type-1 domain is found at 460–590 (LENALTVFTD…ADLLVSSALI (131 aa)). The Mg(2+) site is built by D469, E497, D517, and D582. An Integrase-type zinc finger spans residues 587–628 (SALIKAQELHALTHVNAAGLKNKFDVTWKQAKDIVQHCTQCQ). Zn(2+) contacts are provided by H596, H600, C624, and C627. The Integrase catalytic domain maps to 642–803 (RGLCPNALWQ…TSAEQHLTGK (162 aa)). The integrase-type DNA-binding region spans 811–859 (KLIWWKDNKNKTWEIGKVITWGRGFACVSPGENQLPVWIPTRHLKFYNE).

Belongs to the beta type-B retroviral polymerase family. HERV class-II K(HML-2) pol subfamily.

The enzyme catalyses DNA(n) + a 2'-deoxyribonucleoside 5'-triphosphate = DNA(n+1) + diphosphate. It catalyses the reaction Endonucleolytic cleavage to 5'-phosphomonoester.. In terms of biological role, early post-infection, the reverse transcriptase converts the viral RNA genome into double-stranded viral DNA. The RNase H domain of the reverse transcriptase performs two functions. It degrades the RNA template and specifically removes the RNA primer from the RNA/DNA hybrid. Following nuclear import, the integrase catalyzes the insertion of the linear, double-stranded viral DNA into the host cell chromosome. Endogenous Pol proteins may have kept, lost or modified their original function during evolution. The polypeptide is Endogenous retrovirus group K member 11 Pol protein (ERVK-11) (Homo sapiens (Human)).